Here is a 218-residue protein sequence, read N- to C-terminus: Protein N-lysine methyltransferase METTL21A (218 aa).

Residues W47, 73–75 (GAG), D94, W125, and A143 contribute to the S-adenosyl-L-methionine site.

The protein belongs to the methyltransferase superfamily. METTL21 family.

Its subcellular location is the cytoplasm. The enzyme catalyses L-lysyl-[protein] + 3 S-adenosyl-L-methionine = N(6),N(6),N(6)-trimethyl-L-lysyl-[protein] + 3 S-adenosyl-L-homocysteine + 3 H(+). In terms of biological role, protein-lysine methyltransferase that selectively trimethylates residues in heat shock protein 70 (HSP70) family members. This is Protein N-lysine methyltransferase METTL21A (mettl21a) from Danio rerio (Zebrafish).